A 576-amino-acid chain; its full sequence is Epsin-1 (576 aa).

Residues arginine 8, lysine 11, arginine 25, asparagine 30, arginine 63, and histidine 73 each coordinate a 1,2-diacyl-sn-glycero-3-phospho-(1D-myo-inositol-4,5-bisphosphate). One can recognise an ENTH domain in the interval 12–144 (NIVHNYSEAE…RDEDRLREER (133 aa)). Residues 149 to 185 (KTKEKLAQTATASSAAVGSGPPPEAEQAWPQSSGEEE) form a disordered region. The span at 157-167 (TATASSAAVGS) shows a compositional bias: low complexity. 3 UIM domains span residues 183-202 (EEELQLQLALAMSKEEADQP), 208-227 (EDDAQLQLALSLSREEHDKE), and 233-252 (GDDLRLQMAIEESKRETGGK). Residues 265–296 (TAPAPAPTTDPWGGPAPMAAAVPTAAPTSDPW) are compositionally biased toward low complexity. The tract at residues 265–404 (TAPAPAPTTD…GGFDTEPDEF (140 aa)) is disordered. 8 repeat units span residues 274 to 276 (DPW), 294 to 296 (DPW), 306 to 308 (DPW), 319 to 321 (DPW), 332 to 334 (DPW), 349 to 351 (DPW), 367 to 369 (DPW), and 377 to 379 (DPW). The interval 274–379 (DPWGGPAPMA…TPAPAFSDPW (106 aa)) is 8 X 3 AA repeats of [ED]-P-W. Over residues 297–314 (GGPPVPPAADPWGGPAPT) the composition is skewed to pro residues. Residues 332 to 368 (DPWGGTPAPAAGEGPTPDPWGSSDGGVPVSGPSASDP) are compositionally biased toward low complexity. Serine 382 bears the Phosphoserine; by CDK1 mark. Positions 402-411 (DEFSDFDRLR) match the [DE]-X(1,2)-F-X-X-[FL]-X-X-X-R motif motif. Phosphoserine occurs at positions 419, 420, 435, 447, and 454. The segment at 448-576 (LAEAVGSPPP…PAPNTNPFLL (129 aa)) is disordered. Residues 454–468 (SPPPAATPTPTPPTR) show a composition bias toward pro residues. Phosphothreonine occurs at positions 460, 464, and 470. A Phosphoserine modification is found at serine 473. Threonine 494 carries the phosphothreonine modification. 2 repeat units span residues 502–504 (NPF) and 518–520 (NPF). A 3 X 3 AA repeats of N-P-F region spans residues 502–574 (NPFLPGGGPA…GPPAPNTNPF (73 aa)). Residue arginine 534 is modified to Omega-N-methylarginine. Over residues 557-570 (GLPPMMPPGPPAPN) the composition is skewed to pro residues. Residues 572 to 574 (NPF) form repeat 3.

This sequence belongs to the epsin family. Monomer. Binds clathrin, ZBTB16/ZNF145 and ITSN1. Binds ubiquitinated proteins. Binds AP2A1 and AP2A2. Interacts with RALBP1 in a complex also containing NUMB and TFAP2A during interphase and mitosis. Interacts with AP2B1. Interacts with UBQLN2. Interacts with REPS2; the interaction is direct. Interacts with EPS15; the interaction is direct. Interacts with ENTREP1. Post-translationally, phosphorylated on serine and/or threonine residues in mitotic cells. Phosphorylation reduces interaction with REPS2, AP-2 and the membrane fraction. Depolarization of synaptosomes results in dephosphorylation. Ubiquitinated.

It is found in the cytoplasm. It localises to the cell membrane. The protein localises to the nucleus. Its subcellular location is the membrane. The protein resides in the clathrin-coated pit. Binds to membranes enriched in phosphatidylinositol 4,5-bisphosphate (PtdIns(4,5)P2). Modifies membrane curvature and facilitates the formation of clathrin-coated invaginations. Regulates receptor-mediated endocytosis. The polypeptide is Epsin-1 (EPN1) (Homo sapiens (Human)).